The primary structure comprises 460 residues: A-type ATP synthase subunit B (460 aa).

It belongs to the ATPase alpha/beta chains family. Has multiple subunits with at least A(3), B(3), C, D, E, F, H, I and proteolipid K(x).

It localises to the cell membrane. Functionally, component of the A-type ATP synthase that produces ATP from ADP in the presence of a proton gradient across the membrane. The B chain is a regulatory subunit. This is A-type ATP synthase subunit B from Methanosarcina barkeri.